The primary structure comprises 266 residues: Hydroxyethylthiazole kinase (266 aa).

Position 43 (Met43) interacts with substrate. ATP is bound by residues Arg119 and Thr166. Gly193 is a substrate binding site.

This sequence belongs to the Thz kinase family. The cofactor is Mg(2+).

It catalyses the reaction 5-(2-hydroxyethyl)-4-methylthiazole + ATP = 4-methyl-5-(2-phosphooxyethyl)-thiazole + ADP + H(+). Its pathway is cofactor biosynthesis; thiamine diphosphate biosynthesis; 4-methyl-5-(2-phosphoethyl)-thiazole from 5-(2-hydroxyethyl)-4-methylthiazole: step 1/1. Catalyzes the phosphorylation of the hydroxyl group of 4-methyl-5-beta-hydroxyethylthiazole (THZ). This is Hydroxyethylthiazole kinase from Methanococcus maripaludis (strain DSM 14266 / JCM 13030 / NBRC 101832 / S2 / LL).